The primary structure comprises 347 residues: tRNA N6-adenosine threonylcarbamoyltransferase (347 aa).

2 residues coordinate Fe cation: His-110 and His-114. Substrate contacts are provided by residues 133–137 (VVSGG), Asp-168, Gly-181, Asp-185, and Asn-277. Asp-305 is a binding site for Fe cation.

This sequence belongs to the KAE1 / TsaD family. Requires Fe(2+) as cofactor.

Its subcellular location is the cytoplasm. It carries out the reaction L-threonylcarbamoyladenylate + adenosine(37) in tRNA = N(6)-L-threonylcarbamoyladenosine(37) in tRNA + AMP + H(+). Required for the formation of a threonylcarbamoyl group on adenosine at position 37 (t(6)A37) in tRNAs that read codons beginning with adenine. Is involved in the transfer of the threonylcarbamoyl moiety of threonylcarbamoyl-AMP (TC-AMP) to the N6 group of A37, together with TsaE and TsaB. TsaD likely plays a direct catalytic role in this reaction. This is tRNA N6-adenosine threonylcarbamoyltransferase from Kineococcus radiotolerans (strain ATCC BAA-149 / DSM 14245 / SRS30216).